Here is a 358-residue protein sequence, read N- to C-terminus: Putative purine permease 12 (358 aa).

Transmembrane regions (helical) follow at residues 29–49 (WILV…SVLL), 62–82 (WIST…LSLL), 100–120 (LVWI…LYSV), 128–148 (STYS…YYYI), 153–173 (ITCL…LVSL), 189–209 (LIGC…LSLM), 235–255 (VASC…LLSV), 280–299 (LGCV…FSNL), 300–316 (ISTL…IAVF), and 320–340 (LTEV…FYIY).

This sequence belongs to the purine permeases (TC 2.A.7.14) family.

The protein localises to the membrane. In Arabidopsis thaliana (Mouse-ear cress), this protein is Putative purine permease 12 (PUP12).